A 208-amino-acid polypeptide reads, in one-letter code: Protein-L-isoaspartate O-methyltransferase (208 aa).

Residue S59 is part of the active site.

The protein belongs to the methyltransferase superfamily. L-isoaspartyl/D-aspartyl protein methyltransferase family.

The protein resides in the cytoplasm. It carries out the reaction [protein]-L-isoaspartate + S-adenosyl-L-methionine = [protein]-L-isoaspartate alpha-methyl ester + S-adenosyl-L-homocysteine. In terms of biological role, catalyzes the methyl esterification of L-isoaspartyl residues in peptides and proteins that result from spontaneous decomposition of normal L-aspartyl and L-asparaginyl residues. It plays a role in the repair and/or degradation of damaged proteins. This Vibrio campbellii (strain ATCC BAA-1116) protein is Protein-L-isoaspartate O-methyltransferase.